The sequence spans 292 residues: 4-hydroxy-tetrahydrodipicolinate synthase (292 aa).

Thr-45 serves as a coordination point for pyruvate. Residue Tyr-133 is the Proton donor/acceptor of the active site. The Schiff-base intermediate with substrate role is filled by Lys-162. Ile-204 contributes to the pyruvate binding site.

The protein belongs to the DapA family. Homotetramer; dimer of dimers.

The protein resides in the cytoplasm. It catalyses the reaction L-aspartate 4-semialdehyde + pyruvate = (2S,4S)-4-hydroxy-2,3,4,5-tetrahydrodipicolinate + H2O + H(+). It participates in amino-acid biosynthesis; L-lysine biosynthesis via DAP pathway; (S)-tetrahydrodipicolinate from L-aspartate: step 3/4. Functionally, catalyzes the condensation of (S)-aspartate-beta-semialdehyde [(S)-ASA] and pyruvate to 4-hydroxy-tetrahydrodipicolinate (HTPA). The sequence is that of 4-hydroxy-tetrahydrodipicolinate synthase from Maridesulfovibrio salexigens (strain ATCC 14822 / DSM 2638 / NCIMB 8403 / VKM B-1763) (Desulfovibrio salexigens).